A 101-amino-acid polypeptide reads, in one-letter code: NAD(P)H-quinone oxidoreductase subunit 4L, chloroplastic (101 aa).

Helical transmembrane passes span 2–22 (MLEH…YGLI), 32–52 (MCLE…SDLF), and 61–81 (IFSI…PAIV).

It belongs to the complex I subunit 4L family. In terms of assembly, NDH is composed of at least 16 different subunits, 5 of which are encoded in the nucleus.

It is found in the plastid. Its subcellular location is the chloroplast thylakoid membrane. The enzyme catalyses a plastoquinone + NADH + (n+1) H(+)(in) = a plastoquinol + NAD(+) + n H(+)(out). It catalyses the reaction a plastoquinone + NADPH + (n+1) H(+)(in) = a plastoquinol + NADP(+) + n H(+)(out). In terms of biological role, NDH shuttles electrons from NAD(P)H:plastoquinone, via FMN and iron-sulfur (Fe-S) centers, to quinones in the photosynthetic chain and possibly in a chloroplast respiratory chain. The immediate electron acceptor for the enzyme in this species is believed to be plastoquinone. Couples the redox reaction to proton translocation, and thus conserves the redox energy in a proton gradient. The polypeptide is NAD(P)H-quinone oxidoreductase subunit 4L, chloroplastic (Chloranthus spicatus (Chulantree)).